The primary structure comprises 173 residues: NADH-ubiquinone oxidoreductase chain 6 (173 aa).

Helical transmembrane passes span 1–21 (MTYF…AVAS), 27–47 (YGVV…LSLG), 48–68 (VSFV…VVFV), 85–105 (WGVV…LIVG), 106–126 (GSIG…MFSV), and 139–159 (CGVG…FVVL).

Belongs to the complex I subunit 6 family.

It localises to the mitochondrion membrane. The catalysed reaction is a ubiquinone + NADH + 5 H(+)(in) = a ubiquinol + NAD(+) + 4 H(+)(out). Its function is as follows. Core subunit of the mitochondrial membrane respiratory chain NADH dehydrogenase (Complex I) that is believed to belong to the minimal assembly required for catalysis. Complex I functions in the transfer of electrons from NADH to the respiratory chain. The immediate electron acceptor for the enzyme is believed to be ubiquinone. The sequence is that of NADH-ubiquinone oxidoreductase chain 6 (MT-ND6) from Aethia psittacula (Parakeet auklet).